Consider the following 268-residue polypeptide: Zinc transporter ZupT (268 aa).

8 helical membrane-spanning segments follow: residues 6-26 (IIFA…GGVI), 37-57 (FLAG…FVEI), 73-93 (GGNW…AVID), 126-146 (VLTA…TFVA), 153-173 (IAIP…IAVA), 189-209 (WATL…ILLM), 211-231 (FLGP…MVFI), and 248-268 (TAIY…LLFI). Positions 136 and 139 each coordinate Fe(2+). Residues E139 and H164 each coordinate Zn(2+). Fe(2+) contacts are provided by N165, E168, and E197. Position 168 (E168) interacts with Zn(2+).

This sequence belongs to the ZIP transporter (TC 2.A.5) family. ZupT subfamily.

The protein resides in the cell membrane. The catalysed reaction is Zn(2+)(in) = Zn(2+)(out). Functionally, mediates zinc uptake. May also transport other divalent cations. In Corynebacterium efficiens (strain DSM 44549 / YS-314 / AJ 12310 / JCM 11189 / NBRC 100395), this protein is Zinc transporter ZupT.